The chain runs to 284 residues: MTAKLIDGKAIAASLRQQIAKRVAERSQQGLRTPGLAVILVGSDPASQVYVSHKRKDCEEVGFISQAYDLPAETTQTALTDLIDRLNEDAAVDGILLQLPLPAHLDASLLLERIRPDKDVDGFHPYNVGRLAQRIPLLRPCTPKGIITLLESTGVDLYGLDAVVVGASNIVGRPMAMELLLAGCTVTVTHRFTKDLAGHVGRADLVVVAAGKPGLIKGEWIKPGAIVIDVGINRQDDGKLVGDVVYETALPRAGWITPVPGGVGPMTRACLLENTLYAAETLHD.

NADP(+)-binding positions include 166-168 (GAS) and I232.

It belongs to the tetrahydrofolate dehydrogenase/cyclohydrolase family. Homodimer.

It catalyses the reaction (6R)-5,10-methylene-5,6,7,8-tetrahydrofolate + NADP(+) = (6R)-5,10-methenyltetrahydrofolate + NADPH. The enzyme catalyses (6R)-5,10-methenyltetrahydrofolate + H2O = (6R)-10-formyltetrahydrofolate + H(+). It functions in the pathway one-carbon metabolism; tetrahydrofolate interconversion. Its function is as follows. Catalyzes the oxidation of 5,10-methylenetetrahydrofolate to 5,10-methenyltetrahydrofolate and then the hydrolysis of 5,10-methenyltetrahydrofolate to 10-formyltetrahydrofolate. The sequence is that of Bifunctional protein FolD 1 from Pseudomonas savastanoi pv. phaseolicola (strain 1448A / Race 6) (Pseudomonas syringae pv. phaseolicola (strain 1448A / Race 6)).